Here is a 367-residue protein sequence, read N- to C-terminus: tRNA-specific 2-thiouridylase MnmA (367 aa).

ATP is bound by residues glycine 12–serine 19 and methionine 38. The segment at asparagine 98–aspartate 100 is interaction with target base in tRNA. The active-site Nucleophile is cysteine 103. A disulfide bridge connects residues cysteine 103 and cysteine 200. ATP is bound at residue glycine 128. An interaction with tRNA region spans residues lysine 150–glutamine 152. Cysteine 200 functions as the Cysteine persulfide intermediate in the catalytic mechanism. The interaction with tRNA stretch occupies residues arginine 312–tyrosine 313.

The protein belongs to the MnmA/TRMU family. As to quaternary structure, interacts with TusE.

The protein resides in the cytoplasm. The catalysed reaction is S-sulfanyl-L-cysteinyl-[protein] + uridine(34) in tRNA + AH2 + ATP = 2-thiouridine(34) in tRNA + L-cysteinyl-[protein] + A + AMP + diphosphate + H(+). Its function is as follows. Catalyzes the 2-thiolation of uridine at the wobble position (U34) of tRNA(Lys), tRNA(Glu) and tRNA(Gln), leading to the formation of s(2)U34, the first step of tRNA-mnm(5)s(2)U34 synthesis. Sulfur is provided by IscS, via a sulfur-relay system. Binds ATP and its substrate tRNAs. The polypeptide is tRNA-specific 2-thiouridylase MnmA (Serratia proteamaculans (strain 568)).